The primary structure comprises 544 residues: Chaperonin GroEL (544 aa).

ATP is bound by residues 30–33 (TLGP), Lys-51, 87–91 (DGTTT), Gly-415, 479–481 (NAA), and Asp-495.

The protein belongs to the chaperonin (HSP60) family. Forms a cylinder of 14 subunits composed of two heptameric rings stacked back-to-back. Interacts with the co-chaperonin GroES.

The protein resides in the cytoplasm. The catalysed reaction is ATP + H2O + a folded polypeptide = ADP + phosphate + an unfolded polypeptide.. In terms of biological role, together with its co-chaperonin GroES, plays an essential role in assisting protein folding. The GroEL-GroES system forms a nano-cage that allows encapsulation of the non-native substrate proteins and provides a physical environment optimized to promote and accelerate protein folding. This Acinetobacter baumannii (strain AB307-0294) protein is Chaperonin GroEL.